We begin with the raw amino-acid sequence, 368 residues long: MHENFDKRLEVLLEGLALTRRSLDPEGKENELKELEQQAVQDGFWDDVARAGKISERIARLKQQLSEFNELKNKVSTIQFFLEDEESSKDLEMQKELEKEFVFCEKKITEWETLRLLSGELDRNSCFLSINAGAGGTESCDWVEMVLRMYMRWASSHSWRVEVIDRLDGEVAGIKHITLKLVGEYAYGYAKAESGVHRLVRISPFDSNAKRHTSFASVEVFPEIDDKIEVEIRPGDIRIDTYRSSGAGGQHVNVTDSAVRITHFPTGIVVSCQNERSQIQNREACMNMLRARIYQKLLQERLEKQNIDRKNKKEISWGSQIRNYVFQPYTLVKDVRTGYEVGNIQAMMDGELLDAFIKAYLVDYGEIT.

Gln-250 bears the N5-methylglutamine mark.

This sequence belongs to the prokaryotic/mitochondrial release factor family. In terms of processing, methylated by PrmC. Methylation increases the termination efficiency of RF2.

The protein localises to the cytoplasm. In terms of biological role, peptide chain release factor 2 directs the termination of translation in response to the peptide chain termination codons UGA and UAA. This is Peptide chain release factor 2 from Chlamydia trachomatis serovar L2b (strain UCH-1/proctitis).